We begin with the raw amino-acid sequence, 714 residues long: Transcription factor SFL2 (714 aa).

A DNA-binding region spans residues A15–S134. 3 disordered regions span residues Y187–T467, S565–N658, and S670–K714. Composition is skewed to pro residues over residues G193–Q207 and Q223–P235. Over residues L266 to T275 the composition is skewed to polar residues. Positions P276 to Y285 are enriched in low complexity. Positions P286–Q296 are enriched in pro residues. Polar residues-rich tracts occupy residues D310–H321 and S354–E372. The span at E376–T389 shows a compositional bias: low complexity. Composition is skewed to polar residues over residues S413 to G435 and L444 to D461. Low complexity predominate over residues G574 to S591. Polar residues predominate over residues E599–G608. 2 stretches are compositionally biased toward low complexity: residues T609 to S641 and Q648 to N658. The span at S703–K714 shows a compositional bias: basic and acidic residues.

This sequence belongs to the HSF family.

The protein resides in the nucleus. Transcription factor that plays a role of activator of filamentous growth and which is involved in invasive growth at a high temperature. Required for human oral epithelium colonization and damage. Promotes filamentous growth in EFG1- and FLO8-dependent manners. Antagonizes functions of SFL1. This is Transcription factor SFL2 (SFL2) from Candida albicans (strain SC5314 / ATCC MYA-2876) (Yeast).